Here is a 124-residue protein sequence, read N- to C-terminus: Large ribosomal subunit protein bL12 (124 aa).

The span at 101 to 115 (ALSKDDAEKAKKELE) shows a compositional bias: basic and acidic residues. The disordered stretch occupies residues 101–124 (ALSKDDAEKAKKELEEAGATVELK).

The protein belongs to the bacterial ribosomal protein bL12 family. In terms of assembly, homodimer. Part of the ribosomal stalk of the 50S ribosomal subunit. Forms a multimeric L10(L12)X complex, where L10 forms an elongated spine to which 2 to 4 L12 dimers bind in a sequential fashion. Binds GTP-bound translation factors.

Forms part of the ribosomal stalk which helps the ribosome interact with GTP-bound translation factors. Is thus essential for accurate translation. The sequence is that of Large ribosomal subunit protein bL12 from Hahella chejuensis (strain KCTC 2396).